The chain runs to 83 residues: Hainantoxin-III 11 (83 aa).

The N-terminal stretch at 1–21 (MKASMFLALAGLVLLFVVGYA) is a signal peptide. Residues 22–48 (SESEEKDFPRELLSKIFAVDDFKGEER) constitute a propeptide that is removed on maturation. Disulfide bonds link cysteine 50–cysteine 65, cysteine 57–cysteine 70, and cysteine 64–cysteine 77. At leucine 81 the chain carries Leucine amide.

This sequence belongs to the neurotoxin 10 (Hwtx-1) family. 15 (Hntx-3) subfamily. As to quaternary structure, monomer. In terms of tissue distribution, expressed by the venom gland.

The protein resides in the secreted. Its function is as follows. Selective antagonist of neuronal tetrodotoxin (TTX)-sensitive voltage-gated sodium channels (IC(50)=1270 nM on Nav1.1/SCN1A, 270 nM on Nav1.2/SCN2A, 491 nM on Nav1.3/SCN3A and 232 nM on Nav1.7/SCN9A). This toxin suppress Nav1.7 current amplitude without significantly altering the activation, inactivation, and repriming kinetics. Short extreme depolarizations partially activate the toxin-bound channel, indicating voltage-dependent inhibition of this toxin. This toxin increases the deactivation of the Nav1.7 current after extreme depolarizations. The toxin-Nav1.7 complex is gradually dissociated upon prolonged strong depolarizations in a voltage-dependent manner, and the unbound toxin rebinds to Nav1.7 after a long repolarization. Moreover, analysis of chimeric channels showed that the DIIS3-S4 linker is critical for toxin binding to Nav1.7. These data are consistent with this toxin interacting with Nav1.7 site 4 and trapping the domain II voltage sensor in the closed state. In Cyriopagopus hainanus (Chinese bird spider), this protein is Hainantoxin-III 11.